The primary structure comprises 150 residues: Large ribosomal subunit protein bL9 (150 aa).

Belongs to the bacterial ribosomal protein bL9 family.

Its function is as follows. Binds to the 23S rRNA. The protein is Large ribosomal subunit protein bL9 of Pediococcus pentosaceus (strain ATCC 25745 / CCUG 21536 / LMG 10740 / 183-1w).